The sequence spans 183 residues: Dual-action ribosomal maturation protein DarP (183 aa).

It belongs to the DarP family.

It localises to the cytoplasm. Its function is as follows. Member of a network of 50S ribosomal subunit biogenesis factors which assembles along the 30S-50S interface, preventing incorrect 23S rRNA structures from forming. Promotes peptidyl transferase center (PTC) maturation. The polypeptide is Dual-action ribosomal maturation protein DarP (Escherichia coli O6:H1 (strain CFT073 / ATCC 700928 / UPEC)).